We begin with the raw amino-acid sequence, 167 residues long: GTP-dependent dephospho-CoA kinase (167 aa).

Residues aspartate 39, valine 41, aspartate 58, lysine 60, and glutamate 117 each coordinate GTP.

This sequence belongs to the GTP-dependent DPCK family.

It carries out the reaction 3'-dephospho-CoA + GTP = GDP + CoA + H(+). It functions in the pathway cofactor biosynthesis; coenzyme A biosynthesis. In terms of biological role, catalyzes the GTP-dependent phosphorylation of the 3'-hydroxyl group of dephosphocoenzyme A to form coenzyme A (CoA). The polypeptide is GTP-dependent dephospho-CoA kinase (Korarchaeum cryptofilum (strain OPF8)).